The following is a 597-amino-acid chain: Elongation factor 4 (597 aa).

The 183-residue stretch at 2-184 (KNIRNFSIIA…SIVEHLPAPE (183 aa)) folds into the tr-type G domain. Residues 14–19 (DHGKST) and 131–134 (NKID) contribute to the GTP site.

Belongs to the TRAFAC class translation factor GTPase superfamily. Classic translation factor GTPase family. LepA subfamily.

The protein localises to the cell inner membrane. It carries out the reaction GTP + H2O = GDP + phosphate + H(+). Functionally, required for accurate and efficient protein synthesis under certain stress conditions. May act as a fidelity factor of the translation reaction, by catalyzing a one-codon backward translocation of tRNAs on improperly translocated ribosomes. Back-translocation proceeds from a post-translocation (POST) complex to a pre-translocation (PRE) complex, thus giving elongation factor G a second chance to translocate the tRNAs correctly. Binds to ribosomes in a GTP-dependent manner. The protein is Elongation factor 4 of Desulfotalea psychrophila (strain LSv54 / DSM 12343).